We begin with the raw amino-acid sequence, 77 residues long: Putative snRNP Sm-like protein (77 aa).

Residues 8–77 (PTLRMMLDYV…DSVVVITPAA (70 aa)) enclose the Sm domain.

It belongs to the snRNP Sm proteins family.

This is Putative snRNP Sm-like protein from Aeropyrum pernix (strain ATCC 700893 / DSM 11879 / JCM 9820 / NBRC 100138 / K1).